Consider the following 1193-residue polypeptide: Magnesium-chelatase subunit H (1193 aa).

This sequence belongs to the Mg-chelatase subunit H family.

The enzyme catalyses protoporphyrin IX + Mg(2+) + ATP + H2O = Mg-protoporphyrin IX + ADP + phosphate + 3 H(+). The protein operates within porphyrin-containing compound metabolism; bacteriochlorophyll biosynthesis (light-independent). Its function is as follows. Involved in bacteriochlorophyll pigment biosynthesis; introduces a magnesium ion into protoporphyrin IX to yield Mg-protoroporphyrin IX. This chain is Magnesium-chelatase subunit H (bchH), found in Cereibacter sphaeroides (strain ATCC 17023 / DSM 158 / JCM 6121 / CCUG 31486 / LMG 2827 / NBRC 12203 / NCIMB 8253 / ATH 2.4.1.) (Rhodobacter sphaeroides).